The primary structure comprises 172 residues: MNYFNVGKIVNTQGLQGEMRVLSVTDFAEERFKKGAELALFDEKDQFVQTVTIASHRKQKNFDIIKFKDMYHINTIEKYKGYSLKVAEEDLNDLDDGEFYYHEIIGLEVYEGDSLVGTIKEILQPGANDVWVVKRKGKRDLLLPYIPPVVLNVDIPNKRVDVEILEGLDDED.

A PRC barrel domain is found at 95–168; the sequence is DDGEFYYHEI…RVDVEILEGL (74 aa).

This sequence belongs to the RimM family. As to quaternary structure, binds ribosomal protein uS19.

The protein localises to the cytoplasm. Its function is as follows. An accessory protein needed during the final step in the assembly of 30S ribosomal subunit, possibly for assembly of the head region. Essential for efficient processing of 16S rRNA. May be needed both before and after RbfA during the maturation of 16S rRNA. It has affinity for free ribosomal 30S subunits but not for 70S ribosomes. The protein is Ribosome maturation factor RimM of Streptococcus pneumoniae (strain P1031).